Reading from the N-terminus, the 418-residue chain is 3-isopropylmalate dehydratase large subunit (418 aa).

[4Fe-4S] cluster contacts are provided by cysteine 299, cysteine 359, and cysteine 362.

This sequence belongs to the aconitase/IPM isomerase family. LeuC type 2 subfamily. Heterodimer of LeuC and LeuD. The cofactor is [4Fe-4S] cluster.

It carries out the reaction (2R,3S)-3-isopropylmalate = (2S)-2-isopropylmalate. It functions in the pathway amino-acid biosynthesis; L-leucine biosynthesis; L-leucine from 3-methyl-2-oxobutanoate: step 2/4. In terms of biological role, catalyzes the isomerization between 2-isopropylmalate and 3-isopropylmalate, via the formation of 2-isopropylmaleate. The protein is 3-isopropylmalate dehydratase large subunit of Nitratidesulfovibrio vulgaris (strain DSM 19637 / Miyazaki F) (Desulfovibrio vulgaris).